The sequence spans 97 residues: Acylphosphatase (97 aa).

The Acylphosphatase-like domain maps to 9–97 (RKHIVVTGLV…ETARAFGVRQ (89 aa)). Catalysis depends on residues Arg-24 and Asn-42.

It belongs to the acylphosphatase family.

It catalyses the reaction an acyl phosphate + H2O = a carboxylate + phosphate + H(+). This is Acylphosphatase (acyP) from Bifidobacterium longum (strain NCC 2705).